The following is a 44-amino-acid chain: Photosystem I reaction center subunit IX (44 aa).

A helical transmembrane segment spans residues Tyr-7–Ile-27.

The protein belongs to the PsaJ family.

Its subcellular location is the plastid. The protein resides in the chloroplast thylakoid membrane. In terms of biological role, may help in the organization of the PsaE and PsaF subunits. This Arabis hirsuta (Hairy rock-cress) protein is Photosystem I reaction center subunit IX.